We begin with the raw amino-acid sequence, 408 residues long: 4-O-methyl-glucuronoyl methylesterase 1 (408 aa).

The N-terminal stretch at 1 to 19 (MASSSRFAALLLLALPALA) is a signal peptide. 3 cysteine pairs are disulfide-bonded: C31/C65, C218/C354, and C250/C326. Positions 217–222 (GCSRDG) match the GXSYXG catalytic site motif motif. The active-site Nucleophile is the S219. Substrate-binding residues include K223, Q265, and E273. An N-linked (GlcNAc...) asparagine glycan is attached at N287. W317 is a binding site for substrate. Residue N350 is glycosylated (N-linked (GlcNAc...) asparagine). The active-site Proton donor/acceptor is H353. N-linked (GlcNAc...) asparagine glycosylation is found at N390, N395, and N401.

Belongs to the carbohydrate esterase 15 (CE15) family.

Its subcellular location is the secreted. The catalysed reaction is a 4-O-methyl-alpha-D-glucuronosyl ester derivative + H2O = 4-O-methyl-alpha-D-glucuronate derivative + an alcohol + H(+). Glucuronoyl esterase which may play a significant role in biomass degradation, as it is considered to disconnect hemicellulose from lignin through the hydrolysis of the ester bond between 4-O-methyl-D-glucuronic acid residues of glucuronoxylans and aromatic alcohols of lignin. Can hydrolyze benzyl glucuronic acid (BnGlcA), allyl glucuronic acid (allylGlcA) and to a lower degree methyl glucuronic acid (MeGlcA) in vitro. This Wolfiporia cocos (strain MD-104) (Brown rot fungus) protein is 4-O-methyl-glucuronoyl methylesterase 1.